The sequence spans 363 residues: NAD kinase 1 (363 aa).

Aspartate 68 serves as the catalytic Proton acceptor. Residues 68-69 (DG), arginine 73, 175-176 (ND), arginine 186, aspartate 205, alanine 240, and glutamine 275 each bind NAD(+).

The protein belongs to the NAD kinase family. A divalent metal cation is required as a cofactor.

Its subcellular location is the cytoplasm. The catalysed reaction is NAD(+) + ATP = ADP + NADP(+) + H(+). Functionally, involved in the regulation of the intracellular balance of NAD and NADP, and is a key enzyme in the biosynthesis of NADP. Catalyzes specifically the phosphorylation on 2'-hydroxyl of the adenosine moiety of NAD to yield NADP. This Streptomyces coelicolor (strain ATCC BAA-471 / A3(2) / M145) protein is NAD kinase 1.